Here is a 659-residue protein sequence, read N- to C-terminus: tRNA 5-methylaminomethyl-2-thiouridine biosynthesis bifunctional protein MnmC (659 aa).

The tract at residues 1-236 (MKPVMPHAQL…KWEILRGEFL (236 aa)) is tRNA (mnm(5)s(2)U34)-methyltransferase. Residues 267-659 (IGAGLAGCAT…FALRRLIRGK (393 aa)) are FAD-dependent cmnm(5)s(2)U34 oxidoreductase.

The protein in the N-terminal section; belongs to the methyltransferase superfamily. tRNA (mnm(5)s(2)U34)-methyltransferase family. It in the C-terminal section; belongs to the DAO family. It depends on FAD as a cofactor.

It is found in the cytoplasm. The enzyme catalyses 5-aminomethyl-2-thiouridine(34) in tRNA + S-adenosyl-L-methionine = 5-methylaminomethyl-2-thiouridine(34) in tRNA + S-adenosyl-L-homocysteine + H(+). Catalyzes the last two steps in the biosynthesis of 5-methylaminomethyl-2-thiouridine (mnm(5)s(2)U) at the wobble position (U34) in tRNA. Catalyzes the FAD-dependent demodification of cmnm(5)s(2)U34 to nm(5)s(2)U34, followed by the transfer of a methyl group from S-adenosyl-L-methionine to nm(5)s(2)U34, to form mnm(5)s(2)U34. The sequence is that of tRNA 5-methylaminomethyl-2-thiouridine biosynthesis bifunctional protein MnmC from Pseudomonas fluorescens (strain Pf0-1).